A 299-amino-acid polypeptide reads, in one-letter code: UDP-N-acetylenolpyruvoylglucosamine reductase (299 aa).

The FAD-binding PCMH-type domain maps to 19–192; that stretch reads LGGQALAEVR…AAVTLQLRRS (174 aa). The active site involves arginine 169. The active-site Proton donor is the cysteine 221. Glutamate 292 is a catalytic residue.

This sequence belongs to the MurB family. It depends on FAD as a cofactor.

The protein resides in the cytoplasm. The enzyme catalyses UDP-N-acetyl-alpha-D-muramate + NADP(+) = UDP-N-acetyl-3-O-(1-carboxyvinyl)-alpha-D-glucosamine + NADPH + H(+). It participates in cell wall biogenesis; peptidoglycan biosynthesis. Its function is as follows. Cell wall formation. This chain is UDP-N-acetylenolpyruvoylglucosamine reductase, found in Oleidesulfovibrio alaskensis (strain ATCC BAA-1058 / DSM 17464 / G20) (Desulfovibrio alaskensis).